A 769-amino-acid polypeptide reads, in one-letter code: Calcium up-regulated protein B (769 aa).

Residues 1–22 (MINIEDISKSSNQSEEKQLKST) are disordered. Ricin B-type lectin domains lie at 25–145 (KPKY…WTTF) and 158–296 (FQSK…WITN).

The protein belongs to the cup family.

Its subcellular location is the cytoplasm. It is found in the membrane. Functionally, may play an important role in stabilizing and/or regulating the cell membrane during Ca(2+) stress or certain stages of development. The polypeptide is Calcium up-regulated protein B (cupB) (Dictyostelium discoideum (Social amoeba)).